Here is a 240-residue protein sequence, read N- to C-terminus: Transcriptional regulatory protein ChvI (240 aa).

The Response regulatory domain maps to 3–116 (TIALVDDDRN…LLVERVKAIL (114 aa)). 3 residues coordinate Mg(2+): D8, D9, and D52. D52 carries the 4-aspartylphosphate modification. Positions 139-238 (SRSLERGQLV…LYGVGYRFRE (100 aa)) form a DNA-binding region, ompR/PhoB-type.

Requires Mg(2+) as cofactor. Post-translationally, phosphorylated by ChvG.

Its subcellular location is the cytoplasm. Its pathway is glycan metabolism; exopolysaccharide biosynthesis. Its function is as follows. Member of a two-component regulatory system ChvG(ExoS)/ChvI involved in regulating the production of succinoglycan. The sequence is that of Transcriptional regulatory protein ChvI (chvI) from Rhizobium meliloti (strain 1021) (Ensifer meliloti).